The sequence spans 121 residues: Large ribosomal subunit protein uL14 (121 aa).

Belongs to the universal ribosomal protein uL14 family. In terms of assembly, part of the 50S ribosomal subunit. Forms a cluster with proteins L3 and L19. In the 70S ribosome, L14 and L19 interact and together make contacts with the 16S rRNA in bridges B5 and B8.

Binds to 23S rRNA. Forms part of two intersubunit bridges in the 70S ribosome. The sequence is that of Large ribosomal subunit protein uL14 from Phocaeicola vulgatus (strain ATCC 8482 / DSM 1447 / JCM 5826 / CCUG 4940 / NBRC 14291 / NCTC 11154) (Bacteroides vulgatus).